Reading from the N-terminus, the 192-residue chain is Ion-translocating oxidoreductase complex subunit A (192 aa).

Transmembrane regions (helical) follow at residues 5–25, 39–59, 63–83, 102–122, 134–154, and 171–191; these read ILLI…FLGL, VGMG…AYLV, ILIP…VIAV, LLGI…VALL, VVYG…FAAL, and AIAL…TGLV.

Belongs to the NqrDE/RnfAE family. In terms of assembly, the complex is composed of six subunits: RnfA, RnfB, RnfC, RnfD, RnfE and RnfG.

It is found in the cell inner membrane. Its function is as follows. Part of a membrane-bound complex that couples electron transfer with translocation of ions across the membrane. This Haemophilus influenzae (strain 86-028NP) protein is Ion-translocating oxidoreductase complex subunit A.